Consider the following 235-residue polypeptide: Enolase-phosphatase E1 (235 aa).

This sequence belongs to the HAD-like hydrolase superfamily. MasA/MtnC family. As to quaternary structure, monomer. It depends on Mg(2+) as a cofactor.

It catalyses the reaction 5-methylsulfanyl-2,3-dioxopentyl phosphate + H2O = 1,2-dihydroxy-5-(methylsulfanyl)pent-1-en-3-one + phosphate. It participates in amino-acid biosynthesis; L-methionine biosynthesis via salvage pathway; L-methionine from S-methyl-5-thio-alpha-D-ribose 1-phosphate: step 3/6. It functions in the pathway amino-acid biosynthesis; L-methionine biosynthesis via salvage pathway; L-methionine from S-methyl-5-thio-alpha-D-ribose 1-phosphate: step 4/6. Functionally, bifunctional enzyme that catalyzes the enolization of 2,3-diketo-5-methylthiopentyl-1-phosphate (DK-MTP-1-P) into the intermediate 2-hydroxy-3-keto-5-methylthiopentenyl-1-phosphate (HK-MTPenyl-1-P), which is then dephosphorylated to form the acireductone 1,2-dihydroxy-3-keto-5-methylthiopentene (DHK-MTPene). This is Enolase-phosphatase E1 from Gluconacetobacter diazotrophicus (strain ATCC 49037 / DSM 5601 / CCUG 37298 / CIP 103539 / LMG 7603 / PAl5).